Reading from the N-terminus, the 435-residue chain is Flavonol 7-O-rhamnosyltransferase (435 aa).

Gln-18 lines the UDP pocket. Residue Gln-18 participates in UDP-beta-L-rhamnose binding. Catalysis depends on His-21, which acts as the Proton acceptor. His-21 provides a ligand contact to quercetin. Asp-119 (charge relay) is an active-site residue. 6 residues coordinate UDP: Ser-250, Ala-315, His-332, Gly-336, Ser-337, and Glu-340. The UDP-beta-L-rhamnose site is built by Ser-250, Ala-315, His-332, Gly-336, Ser-337, and Glu-340.

Belongs to the UDP-glycosyltransferase family. Highly expressed in floral buds. Expressed in stems, leaves and flowers. Expressed at low levels in roots and siliques. Expressed on the adaxial side of cotyledons and emerging leaves, in trichomes, root columella cells, and the late elongation/early differentiation zone of roots.

The enzyme catalyses quercitrin + UDP-beta-L-rhamnose = quercetin 3,7-bis-O-alpha-L-rhamnoside + UDP + H(+). The catalysed reaction is quercetin 3-O-beta-D-glucoside + UDP-beta-L-rhamnose = quercetin 3-O-beta-D-glucoside-7-O-alpha-L-rhamnoside + UDP + H(+). The protein operates within flavonoid metabolism. Functionally, flavonol 7-O-rhamnosyltransferase that catalyzes the transfer of rhamnose from UDP-rhamnose to the 7-OH position of 3-O-glycosylated flavonols, such as kaempferol 3-O-rhamnoside, kaempferol 3-O-glucoside, quercetin 3-O-glucoside, quercetin 3-O-galactoside, quercetin 3-O-rhamnoside and isorhamnetin 3-O-glucoside. Is able to glycosylate the flavonols quercetin and kaempferol to yield quercetin 7-O-rhamnoside and kaempferol 7-O-rhamnoside. Shows a strict specificity for UDP-rhamnose as sugar donor. Does not act on 3-O-glycosylated anthocyanins. The accumulation of kaempferol 3-O-rhamnoside-7-O-rhamnoside inhibits basipetal auxin transport, which influences auxin distribution and plant organ development. This Arabidopsis thaliana (Mouse-ear cress) protein is Flavonol 7-O-rhamnosyltransferase.